The sequence spans 147 residues: Urease accessory protein UreE (147 aa).

It belongs to the UreE family.

It is found in the cytoplasm. Involved in urease metallocenter assembly. Binds nickel. Probably functions as a nickel donor during metallocenter assembly. The sequence is that of Urease accessory protein UreE from Nostoc sp. (strain PCC 7120 / SAG 25.82 / UTEX 2576).